The primary structure comprises 329 residues: GTP 3',8-cyclase (329 aa).

The region spanning 8-234 (AFARKFYYLR…QLRQRSDGPA (227 aa)) is the Radical SAM core domain. Arginine 17 lines the GTP pocket. [4Fe-4S] cluster contacts are provided by cysteine 24 and cysteine 28. Position 30 (tyrosine 30) interacts with S-adenosyl-L-methionine. Residue cysteine 31 coordinates [4Fe-4S] cluster. Arginine 68 is a binding site for GTP. Residue glycine 72 coordinates S-adenosyl-L-methionine. Threonine 99 serves as a coordination point for GTP. Serine 123 serves as a coordination point for S-adenosyl-L-methionine. Lysine 160 is a GTP binding site. Methionine 194 contacts S-adenosyl-L-methionine. The [4Fe-4S] cluster site is built by cysteine 257 and cysteine 260. Residue 262-264 (RLR) coordinates GTP. Residue cysteine 274 coordinates [4Fe-4S] cluster.

The protein belongs to the radical SAM superfamily. MoaA family. In terms of assembly, monomer and homodimer. [4Fe-4S] cluster is required as a cofactor.

The catalysed reaction is GTP + AH2 + S-adenosyl-L-methionine = (8S)-3',8-cyclo-7,8-dihydroguanosine 5'-triphosphate + 5'-deoxyadenosine + L-methionine + A + H(+). The protein operates within cofactor biosynthesis; molybdopterin biosynthesis. In terms of biological role, catalyzes the cyclization of GTP to (8S)-3',8-cyclo-7,8-dihydroguanosine 5'-triphosphate. This chain is GTP 3',8-cyclase, found in Shigella dysenteriae serotype 1 (strain Sd197).